Reading from the N-terminus, the 158-residue chain is Transcription elongation factor GreA (158 aa).

Positions 45–72 (AEYHAAREQQSFIEGRIKQLEGELSHAE) form a coiled coil.

It belongs to the GreA/GreB family.

Necessary for efficient RNA polymerase transcription elongation past template-encoded arresting sites. The arresting sites in DNA have the property of trapping a certain fraction of elongating RNA polymerases that pass through, resulting in locked ternary complexes. Cleavage of the nascent transcript by cleavage factors such as GreA or GreB allows the resumption of elongation from the new 3'terminus. GreA releases sequences of 2 to 3 nucleotides. This Xylella fastidiosa (strain M12) protein is Transcription elongation factor GreA.